The following is a 36-amino-acid chain: Potassium channel toxin alpha-KTx 16.9 (36 aa).

Disulfide bonds link Cys7–Cys28, Cys13–Cys33, and Cys17–Cys35.

The protein belongs to the short scorpion toxin superfamily. Potassium channel inhibitor family. Alpha-KTx 16 subfamily. Expressed by the venom gland.

The protein localises to the secreted. Poorly competes with (125)I-kaliotoxin binding on rat brain synaptosome (IC(50)&gt;100 nM). Is a poor Kv1.3/KCNA3 ligand. May have as real target KCa1.1/KCNMA1 channel. Shows weak toxicity on mice. This Buthus paris (Scorpion) protein is Potassium channel toxin alpha-KTx 16.9.